The primary structure comprises 381 residues: MSCFSCFSSKVLDNEGSSMPAPYKQPNSPKRTTGEVVAKNANGPSNNMGARIFTFRELATATKNFRQECLIGEGGFGRVYKGKLENPAQVVAVKQLDRNGLQGQREFLVEVLMLSLLHHRNLVNLIGYCADGDQRLLVYEYMPLGSLEDHLLDLEPGQKPLDWNTRIKIALGAAKGIEYLHDEADPPVIYRDLKSSNILLDPEYVAKLSDFGLAKLGPVGDTLHVSSRVMGTYGYCAPEYQRTGYLTNKSDVYSFGVVLLELISGRRVIDTMRPSHEQNLVTWALPIFRDPTRYWQLADPLLRGDYPEKSLNQAIAVAAMCLHEEPTVRPLMSDVITALSFLGASSNSSNTGSNHLQQNRSNKYQDAVQWDSSPRYANSQM.

The S-palmitoyl cysteine moiety is linked to residue cysteine 3. The segment at 16–41 is disordered; the sequence is GSSMPAPYKQPNSPKRTTGEVVAKNA. A Phosphothreonine modification is found at threonine 54. The Protein kinase domain maps to 65 to 342; that stretch reads FRQECLIGEG…SDVITALSFL (278 aa). ATP is bound by residues 71–79 and lysine 94; that span reads IGEGGFGRV. Phosphotyrosine is present on tyrosine 139. Residue aspartate 192 is the Proton acceptor of the active site. Residues serine 196 and serine 226 each carry the phosphoserine modification. The residue at position 232 (threonine 232) is a Phosphothreonine. At tyrosine 240 the chain carries Phosphotyrosine. Residues 347-381 form a disordered region; that stretch reads NSSNTGSNHLQQNRSNKYQDAVQWDSSPRYANSQM. Residues 355–381 show a composition bias toward polar residues; the sequence is HLQQNRSNKYQDAVQWDSSPRYANSQM.

The protein belongs to the protein kinase superfamily. Ser/Thr protein kinase family.

Its subcellular location is the cell membrane. The catalysed reaction is L-seryl-[protein] + ATP = O-phospho-L-seryl-[protein] + ADP + H(+). The enzyme catalyses L-threonyl-[protein] + ATP = O-phospho-L-threonyl-[protein] + ADP + H(+). In terms of biological role, may be involved in plant defense signaling. The sequence is that of Probable serine/threonine-protein kinase PBL25 from Arabidopsis thaliana (Mouse-ear cress).